Here is a 212-residue protein sequence, read N- to C-terminus: Protein Nef (212 aa).

Gly-2 is lipidated: N-myristoyl glycine; by host. Ser-6 carries the post-translational modification Phosphoserine; by host. An acidic; interacts with host PACS1 and PACS2; stabilizes the interaction of NEF/MHC-I with host AP1M1; necessary for MHC-I internalization region spans residues 67–71 (EESEE). Residues 75–84 (PVRPQVPLRP) form an SH3-binding; interaction with Src family tyrosine kinases region. Residues 78 to 81 (PQVP) carry the PxxP; stabilizes the interaction of NEF/MHC-I with host AP1M1; necessary for MHC-I internalization motif. The tract at residues 114 to 130 (EILDLWVYNTQGIFPDW) is mediates dimerization, Nef-PTE1 interaction. A binding to ATP6V1H region spans residues 154-186 (VDPREVEEATEGETNCLLHPVCQHGMEDTEREV). The short motif at 170–171 (LL) is the Dileucine internalization motif; necessary for CD4 internalization element. Residues 180–181 (ED) carry the Diacidic; necessary for CD4 internalization motif.

It belongs to the lentivirus primate group Nef protein family. Monomer; cytosolic form. Homodimer; membrane bound form. Interacts with Nef associated p21-activated kinase (PAK2); this interaction activates PAK2. Associates with the Nef-MHC-I-AP1 complex; this complex is required for MHC-I internalization. Interacts (via C-terminus) with host PI3-kinase. Interacts with host PACS1; this interaction seems to be weak. Interacts with host PACS2. Interacts with host LCK and MAPK3; these interactions inhibit the kinase activity of the latter. Interacts with host ATP6V1H; this interaction may play a role in CD4 endocytosis. Associates with the CD4-Nef-AP2 complex; this complex is required for CD4 internalization. Interacts with host AP2 subunit alpha and AP2 subunit sigma2. Interacts with TCR-zeta chain; this interaction up-regulates the Fas ligand (FasL) surface expression. Interacts with host HCK, LYN, and SRC; these interactions activate the Src family kinases. Interacts with MAP3K5; this interaction inhibits the Fas and TNFR-mediated death signals. Interacts with beta-COP and PTE1. Interacts with human RACK1; this increases Nef phosphorylation by PKC. Interacts with TP53; this interaction decreases the half-life of TP53, protecting the infected cell against p53-mediated apoptosis. Post-translationally, the virion-associated Nef proteins are cleaved by the viral protease to release the soluble C-terminal core protein. Nef is probably cleaved concomitantly with viral structural proteins on maturation of virus particles. In terms of processing, myristoylated. Phosphorylated on serine residues, probably by host PKCdelta and theta.

The protein localises to the host cell membrane. Its subcellular location is the virion. It localises to the secreted. It is found in the host Golgi apparatus membrane. Functionally, factor of infectivity and pathogenicity, required for optimal virus replication. Alters numerous pathways of T-lymphocyte function and down-regulates immunity surface molecules in order to evade host defense and increase viral infectivity. Alters the functionality of other immunity cells, like dendritic cells, monocytes/macrophages and NK cells. In infected CD4(+) T-lymphocytes, down-regulates the surface MHC-I, mature MHC-II, CD4, CD28, CCR5 and CXCR4 molecules. Mediates internalization and degradation of host CD4 through the interaction of with the cytoplasmic tail of CD4, the recruitment of AP-2 (clathrin adapter protein complex 2), internalization through clathrin coated pits, and subsequent transport to endosomes and lysosomes for degradation. Diverts host MHC-I molecules to the trans-Golgi network-associated endosomal compartments by an endocytic pathway to finally target them for degradation. MHC-I down-regulation may involve AP-1 (clathrin adapter protein complex 1) or possibly Src family kinase-ZAP70/Syk-PI3K cascade recruited by PACS2. In consequence infected cells are masked for immune recognition by cytotoxic T-lymphocytes. Decreasing the number of immune receptors also prevents reinfection by more HIV particles (superinfection). Down-regulates host SERINC3 and SERINC5 thereby excluding these proteins from the viral particles. Virion infectivity is drastically higher when SERINC3 or SERINC5 are excluded from the viral envelope, because these host antiviral proteins impair the membrane fusion event necessary for subsequent virion penetration. In terms of biological role, bypasses host T-cell signaling by inducing a transcriptional program nearly identical to that of anti-CD3 cell activation. Interaction with TCR-zeta chain up-regulates the Fas ligand (FasL). Increasing surface FasL molecules and decreasing surface MHC-I molecules on infected CD4(+) cells send attacking cytotoxic CD8+ T-lymphocytes into apoptosis. Its function is as follows. Plays a role in optimizing the host cell environment for viral replication without causing cell death by apoptosis. Protects the infected cells from apoptosis in order to keep them alive until the next virus generation is ready to strike. Inhibits the Fas and TNFR-mediated death signals by blocking MAP3K5/ASK1. Decreases the half-life of TP53, protecting the infected cell against p53-mediated apoptosis. Inhibits the apoptotic signals regulated by the Bcl-2 family proteins through the formation of a Nef/PI3-kinase/PAK2 complex that leads to activation of PAK2 and induces phosphorylation of host BAD. Functionally, extracellular Nef protein targets CD4(+) T-lymphocytes for apoptosis by interacting with CXCR4 surface receptors. This chain is Protein Nef, found in Homo sapiens (Human).